We begin with the raw amino-acid sequence, 633 residues long: tRNA uridine 5-carboxymethylaminomethyl modification enzyme MnmG (633 aa).

FAD-binding positions include 13–18, valine 125, and serine 180; that span reads GGGHAG. An NAD(+)-binding site is contributed by 273–287; it reads GPRYCPSIEDKITRF. Glutamine 370 serves as a coordination point for FAD.

The protein belongs to the MnmG family. Homodimer. Heterotetramer of two MnmE and two MnmG subunits. FAD is required as a cofactor.

It is found in the cytoplasm. NAD-binding protein involved in the addition of a carboxymethylaminomethyl (cmnm) group at the wobble position (U34) of certain tRNAs, forming tRNA-cmnm(5)s(2)U34. This chain is tRNA uridine 5-carboxymethylaminomethyl modification enzyme MnmG, found in Alteromonas mediterranea (strain DSM 17117 / CIP 110805 / LMG 28347 / Deep ecotype).